The sequence spans 1486 residues: Glutamate synthase [NADPH] large chain (1486 aa).

Residues 1–11 (MLYDKSLERDN) constitute a propeptide that is removed on maturation. The active-site Nucleophile is cysteine 12. A Glutamine amidotransferase type-2 domain is found at 12–402 (CGFGLIAHIE…PGELMVIDTR (391 aa)). Position 1049–1101 (1049–1101 (LVETQQALVANGLRHKIRLQVDGGLKTGVDIIKAAILGAESFGFGTGPMVALG)) interacts with FMN. Positions 1102, 1108, and 1113 each coordinate [3Fe-4S] cluster.

It belongs to the glutamate synthase family. Aggregate of 4 catalytic active heterodimers, consisting of a large and a small subunit. [3Fe-4S] cluster is required as a cofactor. FAD serves as cofactor. Requires FMN as cofactor.

It carries out the reaction 2 L-glutamate + NADP(+) = L-glutamine + 2-oxoglutarate + NADPH + H(+). Its pathway is amino-acid biosynthesis; L-glutamate biosynthesis via GLT pathway; L-glutamate from 2-oxoglutarate and L-glutamine (NADP(+) route): step 1/1. It functions in the pathway energy metabolism; nitrogen metabolism. Catalyzes the conversion of L-glutamine and 2-oxoglutarate into two molecules of L-glutamate. The chain is Glutamate synthase [NADPH] large chain (gltB) from Escherichia coli (strain K12).